The primary structure comprises 291 residues: ATP synthase gamma chain (291 aa).

It belongs to the ATPase gamma chain family. F-type ATPases have 2 components, CF(1) - the catalytic core - and CF(0) - the membrane proton channel. CF(1) has five subunits: alpha(3), beta(3), gamma(1), delta(1), epsilon(1). CF(0) has three main subunits: a, b and c.

The protein resides in the cell inner membrane. Produces ATP from ADP in the presence of a proton gradient across the membrane. The gamma chain is believed to be important in regulating ATPase activity and the flow of protons through the CF(0) complex. This is ATP synthase gamma chain from Methylibium petroleiphilum (strain ATCC BAA-1232 / LMG 22953 / PM1).